The sequence spans 252 residues: Probable phosphatase SO_1652 (252 aa).

The Zn(2+) site is built by H8, H10, H16, H41, E74, H102, H132, D193, and H195.

The protein belongs to the PHP family. Requires Zn(2+) as cofactor.

This Shewanella oneidensis (strain ATCC 700550 / JCM 31522 / CIP 106686 / LMG 19005 / NCIMB 14063 / MR-1) protein is Probable phosphatase SO_1652.